A 388-amino-acid polypeptide reads, in one-letter code: MKTLIAAYSGVLRGERQAEADRSQRSHGGPALSREGSGRWGTGSSILSALQDLFSVTWLNRSKVEKQLQVISVLQWVLSFLVLGVACSAILMYIFCTDCWLIAVLYFTWLVFDWNTPKKGGRRSQWVRNWAVWRYFRDYFPIQLVKTHNLLTTRNYIFGYHPHGIMGLGAFCNFSTEATEVSKKFPGIRPYLATLAGNFRMPVLREYLMSGGICPVSRDTIDYLLSKNGSGNAIIIVVGGAAESLSSMPGKNAVTLRNRKGFVKLALRHGADLVPIYSFGENEVYKQVIFEEGSWGRWVQKKFQKYIGFAPCIFHGRGLFSSDTWGLVPYSKPITTVVGEPITIPKLEHPTQQDIDLYHTMYMEALVKLFDKHKTKFGLPETEVLEVN.

Over 1–69 (MKTLIAAYSG…NRSKVEKQLQ (69 aa)) the chain is Cytoplasmic. The disordered stretch occupies residues 16–40 (RQAEADRSQRSHGGPALSREGSGRW). A helical membrane pass occupies residues 70–88 (VISVLQWVLSFLVLGVACS). The Lumenal portion of the chain corresponds to 89 to 92 (AILM). The helical transmembrane segment at 93 to 112 (YIFCTDCWLIAVLYFTWLVF) threads the bilayer. Over 113-388 (DWNTPKKGGR…LPETEVLEVN (276 aa)) the chain is Cytoplasmic.

Belongs to the diacylglycerol acyltransferase family. As to quaternary structure, forms multimeric complexes consisting of several DGAT2 subunits. Interacts with SLC27A1 and this interaction is enhanced in the presence of ZFYVE1. As to expression, predominantly expressed in liver and white adipose tissue. Expressed at lower level in mammary gland, testis and peripheral blood leukocytes. Expressed in sebaceous glands of normal skin but decreased psoriatic skin.

It localises to the endoplasmic reticulum membrane. The protein localises to the lipid droplet. It is found in the cytoplasm. The protein resides in the perinuclear region. The enzyme catalyses an acyl-CoA + a 1,2-diacyl-sn-glycerol = a triacyl-sn-glycerol + CoA. The catalysed reaction is all-trans-retinol + an acyl-CoA = an all-trans-retinyl ester + CoA. It carries out the reaction 2-(9Z-octadecenoyl)-glycerol + (9Z)-octadecenoyl-CoA = 1,2-di-(9Z-octadecenoyl)-sn-glycerol + CoA. It catalyses the reaction 1,2-di-(9Z-octadecenoyl)-sn-glycerol + (9Z)-octadecenoyl-CoA = 1,2,3-tri-(9Z-octadecenoyl)-glycerol + CoA. The enzyme catalyses all-trans-retinol + hexadecanoyl-CoA = all-trans-retinyl hexadecanoate + CoA. The catalysed reaction is 1-O-(9Z-octadecenyl)-glycerol + (9Z)-octadecenoyl-CoA = 1-O-(9Z-octadecyl)-3-(9Z-octadecenoyl)-glycerol + CoA. It carries out the reaction 1-(9Z-octadecenoyl)-glycerol + (9Z)-octadecenoyl-CoA = 1,2-di-(9Z-octadecenoyl)-glycerol + CoA. It catalyses the reaction 1,2-di-(9Z-octadecenoyl)-sn-glycerol + hexadecanoyl-CoA = 1,2-di-(9Z)-octadecenoyl-3-hexadecanoyl-sn-glycerol + CoA. The enzyme catalyses 1,3-di-(9Z-octadecenoyl)-glycerol + (9Z)-octadecenoyl-CoA = 1,2,3-tri-(9Z-octadecenoyl)-glycerol + CoA. The catalysed reaction is 2,3-di-(9Z)-octadecenoyl-sn-glycerol + (9Z)-octadecenoyl-CoA = 1,2,3-tri-(9Z-octadecenoyl)-glycerol + CoA. It carries out the reaction 2-(9Z-octadecenoyl)-glycerol + hexadecanoyl-CoA = 1-hexadecanoyl-2-(9Z-octadecenoyl)-sn-glycerol + CoA. The protein operates within glycerolipid metabolism; triacylglycerol biosynthesis. Its activity is regulated as follows. Inhibited by niacin. Its function is as follows. Essential acyltransferase that catalyzes the terminal and only committed step in triacylglycerol synthesis by using diacylglycerol and fatty acyl CoA as substrates. Required for synthesis and storage of intracellular triglycerides. Probably plays a central role in cytosolic lipid accumulation. In liver, is primarily responsible for incorporating endogenously synthesized fatty acids into triglycerides. Also functions as an acyl-CoA retinol acyltransferase (ARAT). Also able to use 1-monoalkylglycerol (1-MAkG) as an acyl acceptor for the synthesis of monoalkyl-monoacylglycerol (MAMAG). This chain is Diacylglycerol O-acyltransferase 2, found in Homo sapiens (Human).